The following is a 396-amino-acid chain: Tryptophan synthase beta chain (396 aa).

K88 carries the post-translational modification N6-(pyridoxal phosphate)lysine.

It belongs to the TrpB family. Tetramer of two alpha and two beta chains. Pyridoxal 5'-phosphate serves as cofactor.

It carries out the reaction (1S,2R)-1-C-(indol-3-yl)glycerol 3-phosphate + L-serine = D-glyceraldehyde 3-phosphate + L-tryptophan + H2O. It participates in amino-acid biosynthesis; L-tryptophan biosynthesis; L-tryptophan from chorismate: step 5/5. In terms of biological role, the beta subunit is responsible for the synthesis of L-tryptophan from indole and L-serine. In Shewanella baltica (strain OS185), this protein is Tryptophan synthase beta chain.